A 179-amino-acid chain; its full sequence is ADP-ribosylation factor-like protein 5A (179 aa).

Glycine 2 carries N-myristoyl glycine lipidation. Residues 23 to 30, 66 to 70, 125 to 128, and alanine 159 contribute to the GTP site; these read GLDNAGKT, DIGGQ, and NKQD.

The protein belongs to the small GTPase superfamily. Arf family. In terms of tissue distribution, low amounts were found in most tissues examined with highest levels in brain, intestine and thymus.

Lacks ADP-ribosylation enhancing activity. The chain is ADP-ribosylation factor-like protein 5A (Arl5a) from Rattus norvegicus (Rat).